The sequence spans 364 residues: NADH-quinone oxidoreductase subunit H (364 aa).

8 helical membrane-spanning segments follow: residues 21-41 (AGQI…LLLA), 88-108 (VFLL…AVIP), 120-140 (VGIL…IMGG), 159-179 (MVSY…LAGS), 208-228 (LPLL…GLAE), 267-287 (IVLI…APFP), 301-321 (FYYF…VSMA), and 340-360 (VFLP…VFGP).

This sequence belongs to the complex I subunit 1 family. As to quaternary structure, NDH-1 is composed of 14 different subunits. Subunits NuoA, H, J, K, L, M, N constitute the membrane sector of the complex.

The protein localises to the cell inner membrane. The enzyme catalyses a quinone + NADH + 5 H(+)(in) = a quinol + NAD(+) + 4 H(+)(out). NDH-1 shuttles electrons from NADH, via FMN and iron-sulfur (Fe-S) centers, to quinones in the respiratory chain. The immediate electron acceptor for the enzyme in this species is believed to be ubiquinone. Couples the redox reaction to proton translocation (for every two electrons transferred, four hydrogen ions are translocated across the cytoplasmic membrane), and thus conserves the redox energy in a proton gradient. This subunit may bind ubiquinone. The protein is NADH-quinone oxidoreductase subunit H of Phenylobacterium zucineum (strain HLK1).